Consider the following 473-residue polypeptide: ATP synthase subunit beta (473 aa).

153–160 (GGAGVGKT) is a binding site for ATP.

This sequence belongs to the ATPase alpha/beta chains family. In terms of assembly, F-type ATPases have 2 components, CF(1) - the catalytic core - and CF(0) - the membrane proton channel. CF(1) has five subunits: alpha(3), beta(3), gamma(1), delta(1), epsilon(1). CF(0) has three main subunits: a(1), b(2) and c(9-12). The alpha and beta chains form an alternating ring which encloses part of the gamma chain. CF(1) is attached to CF(0) by a central stalk formed by the gamma and epsilon chains, while a peripheral stalk is formed by the delta and b chains.

It localises to the cell inner membrane. It carries out the reaction ATP + H2O + 4 H(+)(in) = ADP + phosphate + 5 H(+)(out). In terms of biological role, produces ATP from ADP in the presence of a proton gradient across the membrane. The catalytic sites are hosted primarily by the beta subunits. The chain is ATP synthase subunit beta from Rickettsia canadensis (strain McKiel).